We begin with the raw amino-acid sequence, 491 residues long: UDP-N-acetylmuramate--L-alanine ligase (491 aa).

Residue 126 to 132 (GTHGKTT) participates in ATP binding.

This sequence belongs to the MurCDEF family.

Its subcellular location is the cytoplasm. The catalysed reaction is UDP-N-acetyl-alpha-D-muramate + L-alanine + ATP = UDP-N-acetyl-alpha-D-muramoyl-L-alanine + ADP + phosphate + H(+). Its pathway is cell wall biogenesis; peptidoglycan biosynthesis. In terms of biological role, cell wall formation. The protein is UDP-N-acetylmuramate--L-alanine ligase of Escherichia coli O7:K1 (strain IAI39 / ExPEC).